A 720-amino-acid chain; its full sequence is Polyribonucleotide nucleotidyltransferase (720 aa).

2 residues coordinate Mg(2+): Asp-487 and Asp-493. One can recognise a KH domain in the interval 554-613; sequence PRITTISIPKEKIREVIGTGGKVIREICEQTGAKIDIDDDGTIKVASVDADAAQRAIDWI. Residues 623–691 form the S1 motif domain; it reads GVIYNGKVVK…DRGKVKLSMK (69 aa). The disordered stretch occupies residues 695-720; it reads QTTGEDISAQLEAERAASKRERHHED. Positions 706 to 720 are enriched in basic and acidic residues; it reads EAERAASKRERHHED.

The protein belongs to the polyribonucleotide nucleotidyltransferase family. Mg(2+) is required as a cofactor.

Its subcellular location is the cytoplasm. The enzyme catalyses RNA(n+1) + phosphate = RNA(n) + a ribonucleoside 5'-diphosphate. In terms of biological role, involved in mRNA degradation. Catalyzes the phosphorolysis of single-stranded polyribonucleotides processively in the 3'- to 5'-direction. The chain is Polyribonucleotide nucleotidyltransferase from Paramagnetospirillum magneticum (strain ATCC 700264 / AMB-1) (Magnetospirillum magneticum).